The chain runs to 420 residues: Mitochondrial chaperone BCS1 (420 aa).

The Mitochondrial intermembrane segment spans residues Met-1–Tyr-15. Residues Phe-16–Ala-32 form a helical membrane-spanning segment. Residues Arg-33–Asp-420 are Mitochondrial matrix-facing. Gly-230 to Ser-237 contacts ATP.

Belongs to the AAA ATPase family. BCS1 subfamily.

The protein resides in the mitochondrion inner membrane. It carries out the reaction ATP + H2O = ADP + phosphate + H(+). Chaperone necessary for the incorporation of Rieske iron-sulfur protein uqcrfs1 into the mitochondrial respiratory chain complex III. The chain is Mitochondrial chaperone BCS1 (bcs1l) from Danio rerio (Zebrafish).